We begin with the raw amino-acid sequence, 362 residues long: 3-isopropylmalate dehydrogenase (362 aa).

Glycine 78 to glutamate 91 provides a ligand contact to NAD(+). Positions 98, 108, 136, and 226 each coordinate substrate. 3 residues coordinate Mg(2+): aspartate 226, aspartate 250, and aspartate 254. NAD(+) is bound at residue glycine 284–asparagine 296.

Belongs to the isocitrate and isopropylmalate dehydrogenases family. LeuB type 1 subfamily. Homodimer. Mg(2+) is required as a cofactor. The cofactor is Mn(2+).

It localises to the cytoplasm. The catalysed reaction is (2R,3S)-3-isopropylmalate + NAD(+) = 4-methyl-2-oxopentanoate + CO2 + NADH. It participates in amino-acid biosynthesis; L-leucine biosynthesis; L-leucine from 3-methyl-2-oxobutanoate: step 3/4. In terms of biological role, catalyzes the oxidation of 3-carboxy-2-hydroxy-4-methylpentanoate (3-isopropylmalate) to 3-carboxy-4-methyl-2-oxopentanoate. The product decarboxylates to 4-methyl-2 oxopentanoate. This Gloeobacter violaceus (strain ATCC 29082 / PCC 7421) protein is 3-isopropylmalate dehydrogenase.